Consider the following 130-residue polypeptide: Large ribosomal subunit protein bL20c (130 aa).

The protein belongs to the bacterial ribosomal protein bL20 family.

The protein resides in the plastid. The protein localises to the chloroplast. Binds directly to 23S ribosomal RNA and is necessary for the in vitro assembly process of the 50S ribosomal subunit. It is not involved in the protein synthesizing functions of that subunit. The protein is Large ribosomal subunit protein bL20c of Oenothera argillicola (Appalachian evening primrose).